Consider the following 189-residue polypeptide: Interferon alpha-C (189 aa).

A signal peptide spans 1-23; sequence MAPAWSFRLALLLLSCNAICSLG. 2 cysteine pairs are disulfide-bonded: Cys24–Cys122 and Cys52–Cys162.

The protein belongs to the alpha/beta interferon family.

The protein resides in the secreted. Functionally, produced by macrophages, IFN-alpha have antiviral activities. Interferon stimulates the production of two enzymes: a protein kinase and an oligoadenylate synthetase. This is Interferon alpha-C (IFNAC) from Bos taurus (Bovine).